The chain runs to 60 residues: Andropin (60 aa).

Positions 1–23 (MKYFVVLVVLALILAIAVGPSDA) are cleaved as a signal peptide.

This sequence belongs to the andropin family. As to expression, ejaculatory duct of adult males.

It is found in the secreted. Its function is as follows. Male-specific peptide with moderate activity against Gram-positive bacteria. The polypeptide is Andropin (Anp) (Drosophila simulans (Fruit fly)).